The primary structure comprises 740 residues: Homeobox protein 4 (740 aa).

The segment covering 1-13 (MNTVEENNTKITD) has biased composition (polar residues). Disordered regions lie at residues 1-41 (MNTV…ENLS) and 179-491 (NNNN…NNEI). Composition is skewed to low complexity over residues 14–34 (NNNN…NNKN), 179–241 (NNNN…PQQN), 251–288 (NNNN…NNNN), and 303–316 (STTD…SVPS). Residues 254–287 (NINNNNINKNNNNYNNNNNNKNNNNNNNNNNNNN) are a coiled coil. A compositionally biased stretch (basic residues) spans 317-328 (NKKKSSKTKQKS). Positions 339–363 (HKSNYHQQPNQNSQHLQSKPNSPIL) are enriched in polar residues. Composition is skewed to low complexity over residues 365-390 (SSPL…SPPQ) and 397-491 (NNNF…NNEI). The stretch at 472-500 (NTNTNNNNNKNNNNNNNNEIENNNNEELI) forms a coiled coil. The segment at residues 605 to 667 (RPKKGAKLSK…NTRRRKVPTL (63 aa)) is a DNA-binding region (homeobox). Residues 686 to 722 (NNNNNNGGNSNFKNNNNNTITTTSTSNNNNNNNNNNH) are compositionally biased toward low complexity. The disordered stretch occupies residues 686–740 (NNNNNNGGNSNFKNNNNNTITTTSTSNNNNNNNNNNHNEMECDDGENEESSEYDD). Acidic residues predominate over residues 726-740 (ECDDGENEESSEYDD).

It is found in the nucleus. In terms of biological role, putative transcription factor. The chain is Homeobox protein 4 (hbx4) from Dictyostelium discoideum (Social amoeba).